We begin with the raw amino-acid sequence, 178 residues long: MTKKEQALIEQYAKSLVEVASEHHSLDTLQADVLAILETFETTNLDQSLSSLAVPHAEKIKLLTLLERNNSVYMNNFLNLILQNEREAYLYQMLQAVLNEIAIVSNQYNVTVTSSLPLTEEQKSRVRAVVAKKFAVTAGRLIEKVDPSLIGGFIISVNNKVIDTSIRRQLQAFKMNLK.

It belongs to the ATPase delta chain family. In terms of assembly, F-type ATPases have 2 components, F(1) - the catalytic core - and F(0) - the membrane proton channel. F(1) has five subunits: alpha(3), beta(3), gamma(1), delta(1), epsilon(1). F(0) has three main subunits: a(1), b(2) and c(10-14). The alpha and beta chains form an alternating ring which encloses part of the gamma chain. F(1) is attached to F(0) by a central stalk formed by the gamma and epsilon chains, while a peripheral stalk is formed by the delta and b chains.

The protein localises to the cell membrane. F(1)F(0) ATP synthase produces ATP from ADP in the presence of a proton or sodium gradient. F-type ATPases consist of two structural domains, F(1) containing the extramembraneous catalytic core and F(0) containing the membrane proton channel, linked together by a central stalk and a peripheral stalk. During catalysis, ATP synthesis in the catalytic domain of F(1) is coupled via a rotary mechanism of the central stalk subunits to proton translocation. Its function is as follows. This protein is part of the stalk that links CF(0) to CF(1). It either transmits conformational changes from CF(0) to CF(1) or is implicated in proton conduction. In Streptococcus pyogenes serotype M4 (strain MGAS10750), this protein is ATP synthase subunit delta.